A 201-amino-acid chain; its full sequence is Probable chemoreceptor glutamine deamidase CheD 1 (201 aa).

It belongs to the CheD family.

The enzyme catalyses L-glutaminyl-[protein] + H2O = L-glutamyl-[protein] + NH4(+). Its function is as follows. Probably deamidates glutamine residues to glutamate on methyl-accepting chemotaxis receptors (MCPs), playing an important role in chemotaxis. In Geobacter sulfurreducens (strain ATCC 51573 / DSM 12127 / PCA), this protein is Probable chemoreceptor glutamine deamidase CheD 1.